Reading from the N-terminus, the 204-residue chain is Ribonuclease HII (204 aa).

An RNase H type-2 domain is found at 17–204 (QLVAGVDEVG…KPVQQLLQGD (188 aa)). Positions 23, 24, and 115 each coordinate a divalent metal cation.

This sequence belongs to the RNase HII family. It depends on Mn(2+) as a cofactor. Requires Mg(2+) as cofactor.

Its subcellular location is the cytoplasm. The catalysed reaction is Endonucleolytic cleavage to 5'-phosphomonoester.. Its function is as follows. Endonuclease that specifically degrades the RNA of RNA-DNA hybrids. This is Ribonuclease HII from Hahella chejuensis (strain KCTC 2396).